A 396-amino-acid chain; its full sequence is Formate-dependent phosphoribosylglycinamide formyltransferase (396 aa).

Residues 25–26 (EL) and Glu-85 contribute to the N(1)-(5-phospho-beta-D-ribosyl)glycinamide site. Residues Arg-117, Lys-158, 163–168 (SSGKGQ), 198–201 (EAFI), and Glu-206 contribute to the ATP site. Positions 122-311 (RLAAETLAIP…EFALHVRAIL (190 aa)) constitute an ATP-grasp domain. Mg(2+) contacts are provided by Glu-270 and Glu-282. N(1)-(5-phospho-beta-D-ribosyl)glycinamide-binding positions include Asp-289, Lys-359, and 366–367 (RR).

This sequence belongs to the PurK/PurT family. Homodimer.

It carries out the reaction N(1)-(5-phospho-beta-D-ribosyl)glycinamide + formate + ATP = N(2)-formyl-N(1)-(5-phospho-beta-D-ribosyl)glycinamide + ADP + phosphate + H(+). It functions in the pathway purine metabolism; IMP biosynthesis via de novo pathway; N(2)-formyl-N(1)-(5-phospho-D-ribosyl)glycinamide from N(1)-(5-phospho-D-ribosyl)glycinamide (formate route): step 1/1. Its function is as follows. Involved in the de novo purine biosynthesis. Catalyzes the transfer of formate to 5-phospho-ribosyl-glycinamide (GAR), producing 5-phospho-ribosyl-N-formylglycinamide (FGAR). Formate is provided by PurU via hydrolysis of 10-formyl-tetrahydrofolate. The polypeptide is Formate-dependent phosphoribosylglycinamide formyltransferase (Shewanella frigidimarina (strain NCIMB 400)).